A 130-amino-acid chain; its full sequence is Arsenate reductase 2.2 (130 aa).

The 102-residue stretch at 18-119 (RDPRIAVVDV…WELSGRPVCR (102 aa)) folds into the Rhodanese domain. Residue C70 is the Cysteine persulfide intermediate of the active site.

It carries out the reaction [glutaredoxin]-dithiol + arsenate + glutathione + H(+) = glutathionyl-S-S-[glutaredoxin] + arsenite + H2O. In terms of biological role, possesses arsenate reductase activity in vitro. Catalyzes the reduction of arsenate [As(V)] to arsenite [As(III)]. May play a role in arsenic retention in roots. Its function is as follows. Possesses phosphatase activity towards p-nitrophenyl phosphate in vitro. This is Arsenate reductase 2.2 (ACR2.2) from Oryza sativa subsp. japonica (Rice).